Here is a 400-residue protein sequence, read N- to C-terminus: WW domain-containing transcription regulator protein 1 (400 aa).

Lys46 is covalently cross-linked (Glycyl lysine isopeptide (Lys-Gly) (interchain with G-Cter in ubiquitin)). Positions Phe52–Ser117 are disordered. Polar residues predominate over residues His61 to Ser70. The residue at position 62 (Ser62) is a Phosphoserine. At Ser89 the chain carries Phosphoserine; by LATS2. The residue at position 105 (Ser105) is a Phosphoserine. The region spanning Leu124–Lys157 is the WW domain. Residues Pro222–Leu400 form a required for interaction with PALS1 region. Residues Leu225–Ala259 adopt a coiled-coil conformation. Position 295 is a phosphoserine (Ser295). Residue Ser311 is modified to Phosphoserine; by LATS2. The PDZ-binding signature appears at Glu394–Leu400.

As to quaternary structure, binds to SLC9A3R2 via the PDZ motif at the plasma membrane. Binds to YWHAZ in vivo and in vitro through the phosphoserine-binding motif RSHSSP. Interacts (via coiled-coil domain) with SMAD2 (via MH1 domain), SMAD3 and SMAD4. Interacts with MED15. Interacts with PAX8 and NKX2-1. Interacts with TEAD1, TEAD2, TEAD3 and TEAD4. Interacts (via WW domain) with PALS1. Interacts with LATS1. Interacts with YAP1 (when phosphorylated at 'Ser-127'). Interacts (via WW domain) with PRRG4 (via cytoplasmic domain). Interacts (via WW domain) with AMOTL2 (via PPXY motif); the interaction promotes WWTR1/TAZ localization to the cytoplasm and tight junctions, thereby inhibiting its transcriptional coactivator properties. Interacts (via WW domain) with AMOT isoform 1; the interaction facilitates translocation of WWTR1/TAZ to the cytoplasm. Phosphorylated by LATS2 and STK3/MST2. Phosphorylation by LATS2 results in creation of 14-3-3 binding sites, retention in the cytoplasm, and functional inactivation. Phosphorylation results in the inhibition of transcriptional coactivation through YWHAZ-mediated nuclear export. Phosphorylated in the nucleus by PRP4K; phosphorylation leads to nuclear exclusion. In terms of processing, ubiquitinated at Lys-46; leading to proteasomal degradation. Deubiquitinated and stabilized by UCHL1 at Lys-46; leading to inhibition of osteoclastogenesis. In terms of tissue distribution, highly expressed in kidney, heart, placenta and lung. Expressed in the thyroid tissue.

It localises to the nucleus. It is found in the cytoplasm. Its subcellular location is the cell membrane. The protein resides in the cell junction. The protein localises to the tight junction. Its function is as follows. Transcriptional coactivator which acts as a downstream regulatory target in the Hippo signaling pathway that plays a pivotal role in organ size control and tumor suppression by restricting proliferation and promoting apoptosis. The core of this pathway is composed of a kinase cascade wherein STK3/MST2 and STK4/MST1, in complex with its regulatory protein SAV1, phosphorylates and activates LATS1/2 in complex with its regulatory protein MOB1, which in turn phosphorylates and inactivates YAP1 oncoprotein and WWTR1/TAZ. WWTR1 enhances PAX8 and NKX2-1/TTF1-dependent gene activation. In conjunction with YAP1, involved in the regulation of TGFB1-dependent SMAD2 and SMAD3 nuclear accumulation. Plays a key role in coupling SMADs to the transcriptional machinery such as the mediator complex. Regulates embryonic stem-cell self-renewal, promotes cell proliferation and epithelial-mesenchymal transition. This Homo sapiens (Human) protein is WW domain-containing transcription regulator protein 1.